The primary structure comprises 319 residues: Ankyrin repeat domain-containing protein 1 (319 aa).

The stretch at 61 to 89 forms a coiled coil; sequence KTEKQREAELKKKKLEQRSKLENLEDLEI. 5 ANK repeats span residues 152–181, 185–214, 218–247, 251–280, and 284–315; these read YKRT…QIEF, LEST…KISA, LLST…DLNA, EGDT…DLNV, and AGKT…KASR.

Interacts with TTN/titin and YBX1.

The protein resides in the nucleus. Functionally, may play an important role in endothelial cell activation. May act as a nuclear transcription factor that negatively regulates the expression of cardiac genes. This Bos taurus (Bovine) protein is Ankyrin repeat domain-containing protein 1 (ANKRD1).